Here is a 138-residue protein sequence, read N- to C-terminus: Large ribosomal subunit protein uL16m (138 aa).

The protein belongs to the universal ribosomal protein uL16 family.

Its subcellular location is the mitochondrion. The polypeptide is Large ribosomal subunit protein uL16m (RPL16) (Chondrus crispus (Carrageen Irish moss)).